The primary structure comprises 130 residues: Large ribosomal subunit protein bL17 (130 aa).

Belongs to the bacterial ribosomal protein bL17 family. As to quaternary structure, part of the 50S ribosomal subunit. Contacts protein L32.

The polypeptide is Large ribosomal subunit protein bL17 (Photorhabdus laumondii subsp. laumondii (strain DSM 15139 / CIP 105565 / TT01) (Photorhabdus luminescens subsp. laumondii)).